The chain runs to 481 residues: F-box/LRR-repeat protein At3g03360 (481 aa).

The interval 1–28 (MEKESQENSTRPDASSTVFSSSKSTCAS) is disordered. The segment covering 14 to 28 (ASSTVFSSSKSTCAS) has biased composition (low complexity). An F-box domain is found at 36-84 (GDLISRLPDDILQLILSYLPTRLAIKTSVLSRRWRHVWSDTWSLSFHRD). 5 LRR repeats span residues 118 to 145 (SRPD…SLYL), 196 to 221 (HCNI…LLFF), 295 to 320 (EADF…TLGA), 350 to 375 (ISRY…TIHP), and 413 to 439 (RRNV…ELIV).

This is F-box/LRR-repeat protein At3g03360 from Arabidopsis thaliana (Mouse-ear cress).